We begin with the raw amino-acid sequence, 392 residues long: Phospho-N-acetylmuramoyl-pentapeptide-transferase (392 aa).

Transmembrane regions (helical) follow at residues 24 to 44, 76 to 96, 100 to 120, 137 to 157, 193 to 213, 225 to 245, 262 to 282, 289 to 309, 314 to 334, and 369 to 389; these read YLTF…LLAG, TMGG…WFDL, FVWV…VDDW, YFWQ…CISE, VSYP…IVGS, GLAI…AYVT, AGEL…FLWF, VFMG…IAII, IVLA…MLQV, and QVVV…LTTL.

This sequence belongs to the glycosyltransferase 4 family. MraY subfamily. Mg(2+) serves as cofactor.

The protein resides in the cell inner membrane. The catalysed reaction is UDP-N-acetyl-alpha-D-muramoyl-L-alanyl-gamma-D-glutamyl-meso-2,6-diaminopimeloyl-D-alanyl-D-alanine + di-trans,octa-cis-undecaprenyl phosphate = di-trans,octa-cis-undecaprenyl diphospho-N-acetyl-alpha-D-muramoyl-L-alanyl-D-glutamyl-meso-2,6-diaminopimeloyl-D-alanyl-D-alanine + UMP. The protein operates within cell wall biogenesis; peptidoglycan biosynthesis. Catalyzes the initial step of the lipid cycle reactions in the biosynthesis of the cell wall peptidoglycan: transfers peptidoglycan precursor phospho-MurNAc-pentapeptide from UDP-MurNAc-pentapeptide onto the lipid carrier undecaprenyl phosphate, yielding undecaprenyl-pyrophosphoryl-MurNAc-pentapeptide, known as lipid I. The polypeptide is Phospho-N-acetylmuramoyl-pentapeptide-transferase (Paracidovorax citrulli (strain AAC00-1) (Acidovorax citrulli)).